The primary structure comprises 446 residues: Trigger factor (446 aa).

The region spanning 163 to 248 is the PPIase FKBP-type domain; that stretch reads GDIVTIDFKG…VRGIKRKKLA (86 aa). The disordered stretch occupies residues 423–446; it reads SKPVPPREQGAAGETAETAEATPA. Residues 432–446 are compositionally biased toward low complexity; the sequence is GAAGETAETAEATPA.

The protein belongs to the FKBP-type PPIase family. Tig subfamily.

It localises to the cytoplasm. It catalyses the reaction [protein]-peptidylproline (omega=180) = [protein]-peptidylproline (omega=0). In terms of biological role, involved in protein export. Acts as a chaperone by maintaining the newly synthesized protein in an open conformation. Functions as a peptidyl-prolyl cis-trans isomerase. This Moorella thermoacetica (strain ATCC 39073 / JCM 9320) protein is Trigger factor.